The chain runs to 124 residues: Splicing factor 3B subunit 6-like protein (124 aa).

Positions 16–29 (EVNRVLYVRNLPFN) are interaction with pre-mRNA branch site. The 76-residue stretch at 19–94 (RVLYVRNLPF…RYLIVLYYQH (76 aa)) folds into the RRM domain.

It localises to the nucleus. In terms of biological role, may be necessary for the splicing of pre-mRNA. The chain is Splicing factor 3B subunit 6-like protein from Arabidopsis thaliana (Mouse-ear cress).